Consider the following 38-residue polypeptide: MIEPLLLGIVLGLIPVTLAGLFVAAYLQYKRGNDLGME.

Residues 5 to 25 form a helical membrane-spanning segment; it reads LLLGIVLGLIPVTLAGLFVAA.

It belongs to the PetG family. The 4 large subunits of the cytochrome b6-f complex are cytochrome b6, subunit IV (17 kDa polypeptide, PetD), cytochrome f and the Rieske protein, while the 4 small subunits are PetG, PetL, PetM and PetN. The complex functions as a dimer.

It localises to the cellular thylakoid membrane. Component of the cytochrome b6-f complex, which mediates electron transfer between photosystem II (PSII) and photosystem I (PSI), cyclic electron flow around PSI, and state transitions. PetG is required for either the stability or assembly of the cytochrome b6-f complex. The protein is Cytochrome b6-f complex subunit 5 of Picosynechococcus sp. (strain ATCC 27264 / PCC 7002 / PR-6) (Agmenellum quadruplicatum).